A 274-amino-acid polypeptide reads, in one-letter code: Penicillin-insensitive murein endopeptidase (274 aa).

Residues Met-1–Ala-19 form the signal peptide. 3 disulfide bridges follow: Cys-44–Cys-265, Cys-187–Cys-235, and Cys-216–Cys-223. 6 residues coordinate Zn(2+): His-110, His-113, Asp-120, Asp-147, His-150, and His-211. A disordered region spans residues Pro-227–Ile-274.

This sequence belongs to the peptidase M74 family. In terms of assembly, dimer. Zn(2+) serves as cofactor.

The protein localises to the periplasm. Functionally, murein endopeptidase that cleaves the D-alanyl-meso-2,6-diamino-pimelyl amide bond that connects peptidoglycan strands. Likely plays a role in the removal of murein from the sacculus. This is Penicillin-insensitive murein endopeptidase from Escherichia coli O17:K52:H18 (strain UMN026 / ExPEC).